Here is a 300-residue protein sequence, read N- to C-terminus: tRNA dimethylallyltransferase 2 (300 aa).

13–20 (GPTGVGKT) provides a ligand contact to ATP. A substrate-binding site is contributed by 15 to 20 (TGVGKT). The segment at 38 to 41 (DSRQ) is interaction with substrate tRNA.

Belongs to the IPP transferase family. As to quaternary structure, monomer. Requires Mg(2+) as cofactor.

It catalyses the reaction adenosine(37) in tRNA + dimethylallyl diphosphate = N(6)-dimethylallyladenosine(37) in tRNA + diphosphate. Its function is as follows. Catalyzes the transfer of a dimethylallyl group onto the adenine at position 37 in tRNAs that read codons beginning with uridine, leading to the formation of N6-(dimethylallyl)adenosine (i(6)A). This is tRNA dimethylallyltransferase 2 from Porphyromonas gingivalis (strain ATCC 33277 / DSM 20709 / CIP 103683 / JCM 12257 / NCTC 11834 / 2561).